Here is a 134-residue protein sequence, read N- to C-terminus: Small ribosomal subunit protein uS8 (134 aa).

Belongs to the universal ribosomal protein uS8 family. In terms of assembly, part of the 30S ribosomal subunit. Contacts proteins S5 and S12.

One of the primary rRNA binding proteins, it binds directly to 16S rRNA central domain where it helps coordinate assembly of the platform of the 30S subunit. The protein is Small ribosomal subunit protein uS8 of Synechococcus sp. (strain JA-3-3Ab) (Cyanobacteria bacterium Yellowstone A-Prime).